The primary structure comprises 208 residues: N-hydroxyputrescine acetyltransferase (208 aa).

Belongs to the IucB family.

It catalyses the reaction N-hydroxyputrescine + acetyl-CoA = N(1)-acetyl-N(1)-hydroxyputrescine + CoA. It functions in the pathway siderophore biosynthesis. In terms of biological role, N-acetyltransferase involved in the biosynthesis of fimsbactin A, the major siderophore produced by A.baumannii. Catalyzes the acetylation of N-hydroxyputrescine to form N(1)-acetyl-N(1)-hydroxyputrescine (ahPutr). The protein is N-hydroxyputrescine acetyltransferase of Acinetobacter baumannii (strain ATCC 17978 / DSM 105126 / CIP 53.77 / LMG 1025 / NCDC KC755 / 5377).